Consider the following 149-residue polypeptide: UPF0260 protein RCAP_rcc02083 (149 aa).

The protein belongs to the UPF0260 family.

The protein is UPF0260 protein RCAP_rcc02083 of Rhodobacter capsulatus (strain ATCC BAA-309 / NBRC 16581 / SB1003).